The following is a 133-amino-acid chain: ATP synthase epsilon chain, chloroplastic (133 aa).

This sequence belongs to the ATPase epsilon chain family. As to quaternary structure, F-type ATPases have 2 components, CF(1) - the catalytic core - and CF(0) - the membrane proton channel. CF(1) has five subunits: alpha(3), beta(3), gamma(1), delta(1), epsilon(1). CF(0) has three main subunits: a, b and c.

Its subcellular location is the plastid. The protein localises to the chloroplast thylakoid membrane. Its function is as follows. Produces ATP from ADP in the presence of a proton gradient across the membrane. The sequence is that of ATP synthase epsilon chain, chloroplastic from Ipomoea batatas (Sweet potato).